Consider the following 440-residue polypeptide: T-box transcription factor T homolog 2 (440 aa).

The T-box DNA-binding region spans 44 to 215 (LWEKFKSLTN…HNPFAKAFLD (172 aa)). 2 disordered regions span residues 282 to 303 (APYPHPYQRSSPPTNYGHDTAA) and 393 to 440 (TTAS…MPSM). Residues 409–440 (STDSGYGHSTTPPAPQTRITSNNWSPMTMPSM) show a composition bias toward polar residues.

In terms of tissue distribution, mesoderm and notochord.

The protein resides in the nucleus. Functionally, involved in the transcriptional regulation of genes required for mesoderm formation and differentiation. This is T-box transcription factor T homolog 2 from Branchiostoma floridae (Florida lancelet).